A 249-amino-acid polypeptide reads, in one-letter code: 5'-nucleotidase SurE (249 aa).

A divalent metal cation-binding residues include Asp-8, Asp-9, Ser-39, and Asn-91.

This sequence belongs to the SurE nucleotidase family. It depends on a divalent metal cation as a cofactor.

The protein localises to the cytoplasm. It carries out the reaction a ribonucleoside 5'-phosphate + H2O = a ribonucleoside + phosphate. Functionally, nucleotidase that shows phosphatase activity on nucleoside 5'-monophosphates. The sequence is that of 5'-nucleotidase SurE from Pseudomonas savastanoi pv. phaseolicola (strain 1448A / Race 6) (Pseudomonas syringae pv. phaseolicola (strain 1448A / Race 6)).